The chain runs to 67 residues: Probable cold shock protein A (67 aa).

One can recognise a CSD domain in the interval 1 to 66 (MPQGTVKWFN…KGPQATGVRT (66 aa)). Residue K47 forms an Isoglutamyl lysine isopeptide (Lys-Gln) (interchain with Q-Cter in protein Pup) linkage.

Its subcellular location is the cytoplasm. This is Probable cold shock protein A (cspA) from Mycolicibacterium smegmatis (strain ATCC 700084 / mc(2)155) (Mycobacterium smegmatis).